A 967-amino-acid chain; its full sequence is Isoleucine--tRNA ligase (967 aa).

A 'HIGH' region motif is present at residues 64 to 74 (PYANGNIHIGH). Residue E600 coordinates L-isoleucyl-5'-AMP. Positions 641–645 (KQSKS) match the 'KMSKS' region motif. K644 serves as a coordination point for ATP.

This sequence belongs to the class-I aminoacyl-tRNA synthetase family. IleS type 1 subfamily. In terms of assembly, monomer.

The protein resides in the cytoplasm. It catalyses the reaction tRNA(Ile) + L-isoleucine + ATP = L-isoleucyl-tRNA(Ile) + AMP + diphosphate. Its function is as follows. Catalyzes the attachment of isoleucine to tRNA(Ile). As IleRS can inadvertently accommodate and process structurally similar amino acids such as valine, to avoid such errors it has two additional distinct tRNA(Ile)-dependent editing activities. One activity is designated as 'pretransfer' editing and involves the hydrolysis of activated Val-AMP. The other activity is designated 'posttransfer' editing and involves deacylation of mischarged Val-tRNA(Ile). The chain is Isoleucine--tRNA ligase from Agrobacterium fabrum (strain C58 / ATCC 33970) (Agrobacterium tumefaciens (strain C58)).